The following is a 146-amino-acid chain: D-aminoacyl-tRNA deacylase (146 aa).

The short motif at G138 to P139 is the Gly-cisPro motif, important for rejection of L-amino acids element.

Belongs to the DTD family. In terms of assembly, homodimer.

It is found in the cytoplasm. It carries out the reaction glycyl-tRNA(Ala) + H2O = tRNA(Ala) + glycine + H(+). It catalyses the reaction a D-aminoacyl-tRNA + H2O = a tRNA + a D-alpha-amino acid + H(+). In terms of biological role, an aminoacyl-tRNA editing enzyme that deacylates mischarged D-aminoacyl-tRNAs. Also deacylates mischarged glycyl-tRNA(Ala), protecting cells against glycine mischarging by AlaRS. Acts via tRNA-based rather than protein-based catalysis; rejects L-amino acids rather than detecting D-amino acids in the active site. By recycling D-aminoacyl-tRNA to D-amino acids and free tRNA molecules, this enzyme counteracts the toxicity associated with the formation of D-aminoacyl-tRNA entities in vivo and helps enforce protein L-homochirality. The chain is D-aminoacyl-tRNA deacylase from Stenotrophomonas maltophilia (strain R551-3).